A 499-amino-acid polypeptide reads, in one-letter code: RNA polymerase sigma factor SigA (499 aa).

2 stretches are compositionally biased toward basic residues: residues 1–12 and 77–87; these read MSSPKKNFKKPQ and KKRRGRKPKHA. Disordered stretches follow at residues 1 to 25 and 68 to 89; these read MSSP…LNEE and QENK…HAPL. The sigma-70 factor domain-2 stretch occupies residues 252–322; it reads LVTSNLRLVV…TRAIADQART (71 aa). The Interaction with polymerase core subunit RpoC motif lies at 276-279; the sequence is DLIQ. A sigma-70 factor domain-3 region spans residues 331–412; sequence ETINRLAKAE…DTDAQMPDEF (82 aa). The tract at residues 425 to 480 is sigma-70 factor domain-4; the sequence is LLNNCLSEQEELIVRMRIGMPPYNETKTLDEVSQKIKIPREKIRQIETKAIRKLRQ. Positions 453 to 472 form a DNA-binding region, H-T-H motif; the sequence is LDEVSQKIKIPREKIRQIET.

The protein belongs to the sigma-70 factor family. RpoD/SigA subfamily. In terms of assembly, interacts transiently with the RNA polymerase catalytic core.

Its subcellular location is the cytoplasm. Functionally, sigma factors are initiation factors that promote the attachment of RNA polymerase to specific initiation sites and are then released. This sigma factor is the primary sigma factor during exponential growth. This Mycoplasma pneumoniae (strain ATCC 29342 / M129 / Subtype 1) (Mycoplasmoides pneumoniae) protein is RNA polymerase sigma factor SigA.